A 254-amino-acid chain; its full sequence is Type II restriction enzyme HpaI (254 aa).

It carries out the reaction Endonucleolytic cleavage of DNA to give specific double-stranded fragments with terminal 5'-phosphates.. A P subtype restriction enzyme that recognizes the double-stranded sequence 5'-GTTAAC-3' and cleaves after T-3. The sequence is that of Type II restriction enzyme HpaI (hpaIR) from Haemophilus parainfluenzae.